Consider the following 88-residue polypeptide: Small ribosomal subunit protein uS17 (88 aa).

This sequence belongs to the universal ribosomal protein uS17 family. In terms of assembly, part of the 30S ribosomal subunit.

Functionally, one of the primary rRNA binding proteins, it binds specifically to the 5'-end of 16S ribosomal RNA. In Oenococcus oeni (strain ATCC BAA-331 / PSU-1), this protein is Small ribosomal subunit protein uS17.